We begin with the raw amino-acid sequence, 91 residues long: C-C motif chemokine 5 (91 aa).

A signal peptide spans 1 to 23 (MKISAAALTIILTAAALCTPAPA). Disulfide bonds link cysteine 33–cysteine 57 and cysteine 34–cysteine 73.

It belongs to the intercrine beta (chemokine CC) family. T-cell and macrophage specific.

It is found in the secreted. Chemoattractant for blood monocytes, memory T-helper cells and eosinophils. Causes the release of histamine from basophils and activates eosinophils. May activate several chemokine receptors including CCR1, CCR3, CCR4 and CCR5. May also be an agonist of the G protein-coupled receptor GPR75. Together with GPR75, may play a role in neuron survival through activation of a downstream signaling pathway involving the PI3, Akt and MAP kinases. By activating GPR75 may also play a role in insulin secretion by islet cells. In Mus musculus (Mouse), this protein is C-C motif chemokine 5 (Ccl5).